The following is a 406-amino-acid chain: Argininosuccinate synthase (406 aa).

8–16 (AYSGGLDTT) contacts ATP. Residues Tyr86 and Ser91 each contribute to the L-citrulline site. Gly116 contributes to the ATP binding site. Residues Thr118, Asn122, and Asp123 each coordinate L-aspartate. L-citrulline is bound at residue Asn122. The L-citrulline site is built by Arg126, Ser175, Ser184, Glu261, and Tyr273.

Belongs to the argininosuccinate synthase family. Type 1 subfamily. Homotetramer.

Its subcellular location is the cytoplasm. It catalyses the reaction L-citrulline + L-aspartate + ATP = 2-(N(omega)-L-arginino)succinate + AMP + diphosphate + H(+). It participates in amino-acid biosynthesis; L-arginine biosynthesis; L-arginine from L-ornithine and carbamoyl phosphate: step 2/3. The sequence is that of Argininosuccinate synthase from Brachyspira hyodysenteriae (strain ATCC 49526 / WA1).